A 573-amino-acid chain; its full sequence is 60 kDa heat shock protein, mitochondrial (573 aa).

The N-terminal 26 residues, 1–26 (MLRLPTVLRQMRPVSRALAPHLTRAY), are a transit peptide targeting the mitochondrion. At Lys31 the chain carries N6-succinyllysine. Phosphoserine is present on residues Ser67 and Ser70. Lys75 contributes to the ATP binding site. Lys75 is subject to N6-acetyllysine. N6-acetyllysine; alternate is present on Lys82. At Lys82 the chain carries N6-succinyllysine; alternate. An N6-acetyllysine modification is found at Lys87. Tyr90 carries the post-translational modification Phosphotyrosine. Lys91 bears the N6-acetyllysine mark. Residue 111 to 115 (DGTTT) coordinates ATP. Residue Lys125 is modified to N6-acetyllysine; alternate. At Lys125 the chain carries N6-succinyllysine; alternate. Residue Lys130 is modified to N6-acetyllysine. Lys133 carries the post-translational modification N6-acetyllysine; alternate. Lys133 carries the N6-succinyllysine; alternate modification. Lys133 is modified (N6-malonyllysine; alternate). Lys156 carries the N6-acetyllysine modification. Residues Lys191, Lys202, Lys205, Lys218, and Lys236 each carry the N6-acetyllysine; alternate modification. 5 positions are modified to N6-succinyllysine; alternate: Lys191, Lys202, Lys205, Lys218, and Lys236. Lys249 carries the post-translational modification N6-acetyllysine. Lys250 is subject to N6-acetyllysine; alternate. Lys250 is modified (N6-succinyllysine; alternate). Lys269 and Lys292 each carry N6-acetyllysine. Lys301 is subject to N6-succinyllysine. Lys314 carries the post-translational modification N6-acetyllysine. Position 352 is an N6-acetyllysine; alternate (Lys352). At Lys352 the chain carries N6-succinyllysine; alternate. Residues Lys359 and Lys389 each carry the N6-acetyllysine modification. The residue at position 396 (Lys396) is an N6-acetyllysine; alternate. Lys396 is subject to N6-succinyllysine; alternate. A Phosphoserine modification is found at Ser410. Gly440 contacts ATP. Residue Lys455 is modified to N6-acetyllysine; alternate. Lys455 carries the post-translational modification N6-succinyllysine; alternate. An N6-acetyllysine modification is found at Lys469. Lys481 is modified (N6-acetyllysine; alternate). Lys481 is subject to N6-succinyllysine; alternate. Ser488 carries the phosphoserine modification. Asp520 contributes to the ATP binding site. Residue Lys551 forms a Glycyl lysine isopeptide (Lys-Gly) (interchain with G-Cter in SUMO2) linkage.

The protein belongs to the chaperonin (HSP60) family. In terms of assembly, homoheptamer arranged in a ring structure. The functional units of these chaperonins consist of heptameric rings of the large subunit Hsp60, which function as a back-to-back double ring. Interacts with 2 heptameric Hsp10 rings to form the symmetrical football complex. Interacts with HRAS. Interacts with ATAD3A. Interacts with ETFBKMT and EEF1AKMT3. Interacts with MFHAS1.

The protein localises to the mitochondrion matrix. The enzyme catalyses ATP + H2O + a folded polypeptide = ADP + phosphate + an unfolded polypeptide.. Functionally, chaperonin implicated in mitochondrial protein import and macromolecular assembly. Together with Hsp10, facilitates the correct folding of imported proteins. May also prevent misfolding and promote the refolding and proper assembly of unfolded polypeptides generated under stress conditions in the mitochondrial matrix. The functional units of these chaperonins consist of heptameric rings of the large subunit Hsp60, which function as a back-to-back double ring. In a cyclic reaction, Hsp60 ring complexes bind one unfolded substrate protein per ring, followed by the binding of ATP and association with 2 heptameric rings of the co-chaperonin Hsp10. This leads to sequestration of the substrate protein in the inner cavity of Hsp60 where, for a certain period of time, it can fold undisturbed by other cell components. Synchronous hydrolysis of ATP in all Hsp60 subunits results in the dissociation of the chaperonin rings and the release of ADP and the folded substrate protein. This is 60 kDa heat shock protein, mitochondrial (HSPD1) from Cricetulus griseus (Chinese hamster).